The following is a 367-amino-acid chain: tRNA/tmRNA (uracil-C(5))-methyltransferase (367 aa).

Glutamine 190, tyrosine 218, asparagine 223, glutamate 239, and aspartate 299 together coordinate S-adenosyl-L-methionine. The active-site Nucleophile is cysteine 324. Glutamate 358 functions as the Proton acceptor in the catalytic mechanism.

It belongs to the class I-like SAM-binding methyltransferase superfamily. RNA M5U methyltransferase family. TrmA subfamily.

The enzyme catalyses uridine(54) in tRNA + S-adenosyl-L-methionine = 5-methyluridine(54) in tRNA + S-adenosyl-L-homocysteine + H(+). It catalyses the reaction uridine(341) in tmRNA + S-adenosyl-L-methionine = 5-methyluridine(341) in tmRNA + S-adenosyl-L-homocysteine + H(+). In terms of biological role, dual-specificity methyltransferase that catalyzes the formation of 5-methyluridine at position 54 (m5U54) in all tRNAs, and that of position 341 (m5U341) in tmRNA (transfer-mRNA). The polypeptide is tRNA/tmRNA (uracil-C(5))-methyltransferase (Erwinia tasmaniensis (strain DSM 17950 / CFBP 7177 / CIP 109463 / NCPPB 4357 / Et1/99)).